Consider the following 217-residue polypeptide: tRNA (guanine-N(7)-)-methyltransferase (217 aa).

4 residues coordinate S-adenosyl-L-methionine: Glu44, Asp69, Asp96, and Asp118. The active site involves Asp118. Residue Lys122 coordinates substrate. Residues 124–129 (RHEKRR) are interaction with RNA. Residues Asp154 and 193 to 196 (TEYE) contribute to the substrate site.

This sequence belongs to the class I-like SAM-binding methyltransferase superfamily. TrmB family.

The catalysed reaction is guanosine(46) in tRNA + S-adenosyl-L-methionine = N(7)-methylguanosine(46) in tRNA + S-adenosyl-L-homocysteine. Its pathway is tRNA modification; N(7)-methylguanine-tRNA biosynthesis. Functionally, catalyzes the formation of N(7)-methylguanine at position 46 (m7G46) in tRNA. In Lactococcus lactis subsp. lactis (strain IL1403) (Streptococcus lactis), this protein is tRNA (guanine-N(7)-)-methyltransferase.